We begin with the raw amino-acid sequence, 172 residues long: Adenine phosphoribosyltransferase (172 aa).

This sequence belongs to the purine/pyrimidine phosphoribosyltransferase family. As to quaternary structure, homodimer.

The protein localises to the cytoplasm. The catalysed reaction is AMP + diphosphate = 5-phospho-alpha-D-ribose 1-diphosphate + adenine. It participates in purine metabolism; AMP biosynthesis via salvage pathway; AMP from adenine: step 1/1. Catalyzes a salvage reaction resulting in the formation of AMP, that is energically less costly than de novo synthesis. The protein is Adenine phosphoribosyltransferase of Latilactobacillus sakei subsp. sakei (strain 23K) (Lactobacillus sakei subsp. sakei).